Here is a 532-residue protein sequence, read N- to C-terminus: Purple acid phosphatase 15 (532 aa).

The signal sequence occupies residues 1–19 (MTFLLLLLFCFLSPAISSA). N136 is a glycosylation site (N-linked (GlcNAc...) asparagine). D194 serves as a coordination point for Fe cation. N-linked (GlcNAc...) asparagine glycosylation occurs at N200. Positions 221 and 224 each coordinate Fe cation. Zn(2+) is bound at residue D221. N-linked (GlcNAc...) asparagine glycans are attached at residues N231 and N264. N277 contacts Zn(2+). Position 277 (N277) interacts with substrate. N-linked (GlcNAc...) asparagine glycans are attached at residues N286 and N301. H359 contacts Zn(2+). The active-site Proton donor is H369. Residue H396 participates in Zn(2+) binding. Residue 396-398 (HVH) participates in substrate binding. Residue H398 participates in Fe cation binding. N491 carries N-linked (GlcNAc...) asparagine glycosylation.

Belongs to the metallophosphoesterase superfamily. Purple acid phosphatase family. As to quaternary structure, homodimer. Fe cation serves as cofactor. Zn(2+) is required as a cofactor. Expressed in roots, stems, cotyledons, leaves, flowers and siliques.

It localises to the secreted. The enzyme catalyses 1D-myo-inositol hexakisphosphate + H2O = 1D-myo-inositol 1,2,3,5,6-pentakisphosphate + phosphate. It carries out the reaction a phosphate monoester + H2O = an alcohol + phosphate. Functionally, acid phosphatase activity with p-nitrophenyl phosphate (pNPP), D-myoinositol 1-phosphate (Ins(1)P1), phytic acid and Myo-inositol hexakisphosphate. Low or no activity with Glc-6-P and ATP. Confers shoot growth stimulation, enhanced salt and osmotic stress tolerance, and ABA insensitivity. May modulate ascorbic acid (AsA) levels by controlling the input of myoinositol into this branch of AsA biosynthesis. This Arabidopsis thaliana (Mouse-ear cress) protein is Purple acid phosphatase 15 (PAP15).